Here is a 677-residue protein sequence, read N- to C-terminus: Methionine--tRNA ligase (677 aa).

Positions 15–25 match the 'HIGH' region motif; the sequence is PYANGSIHLGH. Positions 146, 149, 159, and 162 each coordinate Zn(2+). The 'KMSKS' region motif lies at 333-337; it reads KMSKS. Residue lysine 336 coordinates ATP. The region spanning 575-677 is the tRNA-binding domain; it reads DFAKVDLRVA…DGAKPGQQVK (103 aa).

This sequence belongs to the class-I aminoacyl-tRNA synthetase family. MetG type 1 subfamily. Homodimer. It depends on Zn(2+) as a cofactor.

Its subcellular location is the cytoplasm. The catalysed reaction is tRNA(Met) + L-methionine + ATP = L-methionyl-tRNA(Met) + AMP + diphosphate. Functionally, is required not only for elongation of protein synthesis but also for the initiation of all mRNA translation through initiator tRNA(fMet) aminoacylation. In Citrobacter koseri (strain ATCC BAA-895 / CDC 4225-83 / SGSC4696), this protein is Methionine--tRNA ligase.